Here is a 733-residue protein sequence, read N- to C-terminus: ATP-dependent RNA helicase DBP7 (733 aa).

Disordered regions lie at residues 1–92 and 119–139; these read MDED…SKMI and SSQL…SNAP. The span at 17–30 shows a compositional bias: polar residues; sequence SVSSGSNKRTTSKV. Positions 52–80 are enriched in basic and acidic residues; it reads QKKDRSATGKDDGKKHENDESNDSKKRPT. The Q motif motif lies at 144–173; it reads STFEGLGINERLSKHLTETLRFKNPTKVQK. Residues 177-372 enclose the Helicase ATP-binding domain; that stretch reads PTMLSTERDL…SIILNNPEMI (196 aa). 190 to 197 is a binding site for ATP; sequence AQTGSGKT. The DEAD box motif lies at 304–307; the sequence is DEGD. The Helicase C-terminal domain maps to 406 to 596; that stretch reads TLSAILKKIS…NYENYLKDGF (191 aa). Residues 687–714 form a disordered region; that stretch reads KKLGKSVESNSGIQGASKKTKKEDPRKK.

This sequence belongs to the DEAD box helicase family. DDX31/DBP7 subfamily.

It localises to the nucleus. It is found in the nucleolus. The enzyme catalyses ATP + H2O = ADP + phosphate + H(+). ATP-binding RNA helicase involved in the biogenesis of 60S ribosomal subunits and is required for the normal formation of 25S and 5.8S rRNAs. The protein is ATP-dependent RNA helicase DBP7 (DPB7) of Scheffersomyces stipitis (strain ATCC 58785 / CBS 6054 / NBRC 10063 / NRRL Y-11545) (Yeast).